We begin with the raw amino-acid sequence, 391 residues long: MGKSKFERNKPHVNIGTIGHVDHGKTSLTAAITKYFGEYKAYDQIDAAPEEKARGITISTAHVEYETPARHYAHVDCPGHADYVKNMITGAAQMDGAILVCSAADGPMPQTREHILLARQVGVPAIVVFLNKVDQVDDAELLELVELEVRELLSSYDFPGDDIPIIKGSALAALEDSDKKIGEDAIRELMAAVDAYIPTPERPINLPFLLPIEDVFSISGRGTVVTGRVERGIVKVGEEVEIVGIRPTTKTTVTGVEMFRKLLDQGQAGDNIGALIRGVTRDGVERGQILCKPGSVKPHKKFMAEAYILTKEEGGRHTPFFTNYRPQFYFRTTDVTGIVTLPEGTEMVMPGDNVTVSVELIVPIAMEEKLRFAIREGGRTVGAGIVASIVE.

The 192-residue stretch at 10-201 (KPHVNIGTIG…AVDAYIPTPE (192 aa)) folds into the tr-type G domain. Positions 19–26 (GHVDHGKT) are G1. Residue 19-26 (GHVDHGKT) coordinates GTP. A Mg(2+)-binding site is contributed by T26. A G2 region spans residues 55 to 59 (GITIS). The segment at 76–79 (DCPG) is G3. GTP-binding positions include 76–80 (DCPGH) and 131–134 (NKVD). Residues 131-134 (NKVD) are G4. The G5 stretch occupies residues 169 to 171 (SAL).

This sequence belongs to the TRAFAC class translation factor GTPase superfamily. Classic translation factor GTPase family. EF-Tu/EF-1A subfamily. Monomer.

The protein resides in the cytoplasm. The enzyme catalyses GTP + H2O = GDP + phosphate + H(+). In terms of biological role, GTP hydrolase that promotes the GTP-dependent binding of aminoacyl-tRNA to the A-site of ribosomes during protein biosynthesis. The protein is Elongation factor Tu of Rhizobium johnstonii (strain DSM 114642 / LMG 32736 / 3841) (Rhizobium leguminosarum bv. viciae).